The chain runs to 1036 residues: Lethal(2) giant larvae protein homolog 1 (1036 aa).

10 WD repeats span residues Ser38–Leu71, Val78–Phe119, Val139–Leu175, Ser199–Phe233, Leu239–Pro271, Ala289–Val331, Val339–Leu373, Thr395–Ser473, Gln517–Ile592, and Thr601–Ser662. Position 662 is a phosphoserine (Ser662). Residues Arg667–Thr677 are compositionally biased toward basic residues. Residues Arg667–Asn688 form a disordered region. Over residues Ala679 to Asn688 the composition is skewed to polar residues. WD repeat units follow at residues Val722–Gln782, Ala791–Lys843, Leu848–Ser901, and Val915–Ala938. At Thr957 the chain carries Phosphothreonine. A phosphoserine mark is found at Ser964, Ser982, and Ser989. The interval Pro980–Glu1002 is disordered.

Belongs to the WD repeat L(2)GL family. In terms of assembly, associated with nonmuscle myosin II heavy chain. Interacts with PRKCI/aPKC, PARD6B/Par-6 and PARD6A. Interacts with STX4A. Interacts with RAB10 (GDP-bound form); the interaction is direct and promotes RAB10 association with membranes and activation through competition with the Rab inhibitor GDI1. Interacts with DCAF1. In terms of processing, phosphorylated by PRKCI on at least one of the following Ser residues: Ser 654, Ser-658, Ser-662, Ser-669 and Ser-672. Phosphorylation is important for appropriated cell polarization.

It is found in the early endosome membrane. The protein localises to the golgi apparatus. Its subcellular location is the trans-Golgi network membrane. The protein resides in the golgi apparatus membrane. It localises to the cell projection. It is found in the axon. The protein localises to the cytoplasm. Its subcellular location is the cytoskeleton. Its function is as follows. Cortical cytoskeleton protein found in a complex involved in maintaining cell polarity and epithelial integrity. Involved in the regulation of mitotic spindle orientation, proliferation, differentiation and tissue organization of neuroepithelial cells. Involved in axonogenesis through RAB10 activation thereby regulating vesicular membrane trafficking toward the axonal plasma membrane. The protein is Lethal(2) giant larvae protein homolog 1 (Llgl1) of Mus musculus (Mouse).